We begin with the raw amino-acid sequence, 180 residues long: Endoribonuclease YbeY (180 aa).

His-136, His-140, and His-146 together coordinate Zn(2+).

The protein belongs to the endoribonuclease YbeY family. Zn(2+) serves as cofactor.

The protein resides in the cytoplasm. In terms of biological role, single strand-specific metallo-endoribonuclease involved in late-stage 70S ribosome quality control and in maturation of the 3' terminus of the 16S rRNA. The chain is Endoribonuclease YbeY from Synechococcus sp. (strain CC9902).